The chain runs to 322 residues: 4-hydroxy-3-methylbut-2-enyl diphosphate reductase (322 aa).

Residue Cys-15 participates in [4Fe-4S] cluster binding. The (2E)-4-hydroxy-3-methylbut-2-enyl diphosphate site is built by His-44 and His-77. Positions 44 and 77 each coordinate dimethylallyl diphosphate. Isopentenyl diphosphate contacts are provided by His-44 and His-77. A [4Fe-4S] cluster-binding site is contributed by Cys-99. (2E)-4-hydroxy-3-methylbut-2-enyl diphosphate is bound at residue His-127. His-127 lines the dimethylallyl diphosphate pocket. His-127 lines the isopentenyl diphosphate pocket. Residue Glu-129 is the Proton donor of the active site. Residue Thr-168 participates in (2E)-4-hydroxy-3-methylbut-2-enyl diphosphate binding. Cys-198 contributes to the [4Fe-4S] cluster binding site. Positions 226, 227, 228, and 270 each coordinate (2E)-4-hydroxy-3-methylbut-2-enyl diphosphate. Ser-226, Ser-227, Asn-228, and Ser-270 together coordinate dimethylallyl diphosphate. Isopentenyl diphosphate is bound by residues Ser-226, Ser-227, Asn-228, and Ser-270.

This sequence belongs to the IspH family. [4Fe-4S] cluster is required as a cofactor.

The enzyme catalyses isopentenyl diphosphate + 2 oxidized [2Fe-2S]-[ferredoxin] + H2O = (2E)-4-hydroxy-3-methylbut-2-enyl diphosphate + 2 reduced [2Fe-2S]-[ferredoxin] + 2 H(+). The catalysed reaction is dimethylallyl diphosphate + 2 oxidized [2Fe-2S]-[ferredoxin] + H2O = (2E)-4-hydroxy-3-methylbut-2-enyl diphosphate + 2 reduced [2Fe-2S]-[ferredoxin] + 2 H(+). It functions in the pathway isoprenoid biosynthesis; dimethylallyl diphosphate biosynthesis; dimethylallyl diphosphate from (2E)-4-hydroxy-3-methylbutenyl diphosphate: step 1/1. Its pathway is isoprenoid biosynthesis; isopentenyl diphosphate biosynthesis via DXP pathway; isopentenyl diphosphate from 1-deoxy-D-xylulose 5-phosphate: step 6/6. Its function is as follows. Catalyzes the conversion of 1-hydroxy-2-methyl-2-(E)-butenyl 4-diphosphate (HMBPP) into a mixture of isopentenyl diphosphate (IPP) and dimethylallyl diphosphate (DMAPP). Acts in the terminal step of the DOXP/MEP pathway for isoprenoid precursor biosynthesis. The protein is 4-hydroxy-3-methylbut-2-enyl diphosphate reductase of Neisseria meningitidis serogroup A / serotype 4A (strain DSM 15465 / Z2491).